We begin with the raw amino-acid sequence, 306 residues long: Curved DNA-binding protein (306 aa).

The region spanning 5 to 69 is the J domain; sequence DYYAIMGVKP…QRRAEYDQMW (65 aa).

Its subcellular location is the cytoplasm. It localises to the nucleoid. DNA-binding protein that preferentially recognizes a curved DNA sequence. It is probably a functional analog of DnaJ; displays overlapping activities with DnaJ, but functions under different conditions, probably acting as a molecular chaperone in an adaptive response to environmental stresses other than heat shock. Lacks autonomous chaperone activity; binds native substrates and targets them for recognition by DnaK. Its activity is inhibited by the binding of CbpM. The sequence is that of Curved DNA-binding protein from Escherichia fergusonii (strain ATCC 35469 / DSM 13698 / CCUG 18766 / IAM 14443 / JCM 21226 / LMG 7866 / NBRC 102419 / NCTC 12128 / CDC 0568-73).